We begin with the raw amino-acid sequence, 471 residues long: Adenosylhomocysteinase (471 aa).

Positions 60, 135, and 196 each coordinate substrate. Thr197–Thr199 lines the NAD(+) pocket. Residues Lys226 and Asp230 each contribute to the substrate site. NAD(+) is bound by residues Asn231, Gly260–Gly265, Glu283, Asn318, Ile339–His341, and Asn387.

The protein belongs to the adenosylhomocysteinase family. The cofactor is NAD(+).

Its subcellular location is the cytoplasm. The enzyme catalyses S-adenosyl-L-homocysteine + H2O = L-homocysteine + adenosine. It functions in the pathway amino-acid biosynthesis; L-homocysteine biosynthesis; L-homocysteine from S-adenosyl-L-homocysteine: step 1/1. In terms of biological role, may play a key role in the regulation of the intracellular concentration of adenosylhomocysteine. The sequence is that of Adenosylhomocysteinase from Chlorobium phaeovibrioides (strain DSM 265 / 1930) (Prosthecochloris vibrioformis (strain DSM 265)).